Reading from the N-terminus, the 325-residue chain is DNA-directed RNA polymerase subunit alpha (325 aa).

An alpha N-terminal domain (alpha-NTD) region spans residues M1 to E238. Residues K254–F325 form an alpha C-terminal domain (alpha-CTD) region.

The protein belongs to the RNA polymerase alpha chain family. As to quaternary structure, homodimer. The RNAP catalytic core consists of 2 alpha, 1 beta, 1 beta' and 1 omega subunit. When a sigma factor is associated with the core the holoenzyme is formed, which can initiate transcription.

It carries out the reaction RNA(n) + a ribonucleoside 5'-triphosphate = RNA(n+1) + diphosphate. Functionally, DNA-dependent RNA polymerase catalyzes the transcription of DNA into RNA using the four ribonucleoside triphosphates as substrates. This chain is DNA-directed RNA polymerase subunit alpha, found in Leptospira borgpetersenii serovar Hardjo-bovis (strain JB197).